The following is a 1000-amino-acid chain: SEC23-interacting protein (1000 aa).

The tract at residues 1–367 is interaction with SEC23A; it reads MAERKPNGGS…YTEEFSEKLE (367 aa). The segment at 133–252 is disordered; that stretch reads FSPSISKAQP…QQVPARPGAP (120 aa). The span at 154–167 shows a compositional bias: low complexity; sequence SYLPSQPSSLPPSY. Positions 207–218 are enriched in pro residues; sequence PGPPAHPPPSGP. Over residues 235–246 the composition is skewed to low complexity; sequence SSVQSPAQQQVP. Positions 644–707 constitute an SAM domain; it reads KEVLTLQETL…NFVEHKAAKL (64 aa). Positions 716 to 748 are disordered; it reads AVAATSTKGQEQSAQKTKDMASLPSESNEPKRK. Phosphoserine occurs at positions 737 and 926. The 211-residue stretch at 779-989 folds into the DDHD domain; sequence LDFEPEIFFA…ALLLLKEIYR (211 aa).

The protein belongs to the PA-PLA1 family. As to quaternary structure, interacts with SEC23A. As to expression, ubiquitously expressed with stronger levels detected in heart, liver and skeletal muscle.

It localises to the cytoplasmic vesicle. It is found in the COPII-coated vesicle membrane. Its subcellular location is the endoplasmic reticulum. Functionally, plays a role in the organization of endoplasmic reticulum exit sites. Specifically binds to phosphatidylinositol 3-phosphate (PI(3)P), phosphatidylinositol 4-phosphate (PI(4)P) and phosphatidylinositol 5-phosphate (PI(5)P). The sequence is that of SEC23-interacting protein (SEC23IP) from Homo sapiens (Human).